Consider the following 714-residue polypeptide: Cadherin-13 (714 aa).

The N-terminal stretch at 1–22 (MQPRTPLTLCVLLSQVLLVTSA) is a signal peptide. The propeptide occupies 23–138 (DDLECTPGFQ…RTSPVPRQKR (116 aa)). Cadherin domains follow at residues 143-245 (SPIL…RPIF), 246-363 (REGP…SPKF), 364-477 (TKKE…GPVF), 478-585 (YPDP…APVI), and 586-680 (YPTV…VQVC). Positions 156–183 (PRDVGKVVDSDRPEGSKFRLTGKGVDQD) are disordered. The span at 158 to 172 (DVGKVVDSDRPEGSK) shows a compositional bias: basic and acidic residues. N-linked (GlcNAc...) asparagine glycans are attached at residues Asn-382, Asn-489, Asn-500, Asn-530, Asn-598, Asn-638, and Asn-671. Residue Gly-693 is the site of GPI-anchor amidated glycine attachment. Residues 694–714 (ALHLSLSLLLLFSLLSLLSGL) constitute a propeptide, removed in mature form.

In terms of assembly, by contrast to classical cadherins, homodimerization in trans is not mediated by cadherin EC1 domain strand-swapping, but instead through a homophilic adhesive interface which joins two elongated EC1-EC2 domains through a region near their Ca2+-binding sites to form a tetrahedral, X-like shape.

It localises to the cell membrane. The protein localises to the cytoplasm. Its function is as follows. Cadherins are calcium-dependent cell adhesion proteins. They preferentially interact with themselves in a homophilic manner in connecting cells; cadherins may thus contribute to the sorting of heterogeneous cell types. May act as a negative regulator of neural cell growth. This is Cadherin-13 (Cdh13) from Mus musculus (Mouse).